An 874-amino-acid chain; its full sequence is MTENSQQPQPAPSTELPTQYTPAEVEGQLYERWVERGYFEADAKSDKPPYTVVIPPPNVTGSLHLGHAFEHTLIDALTRRKRMQGYETLWQPGMDHAGIATQNVVERELGKEGKSRHDLGREAFVERVWQWKSESGGQISGQMRRLGDAVAWSRERFTMDEGLSQAVQTIFKRLYDDELIYRAERIINWCPRCLTAISDIEVEYQDDDGELVSMKYGEGDETIVVATTRAETMLGDTAVAVHPEDERYKHLVGKLIKLPLTDRSIPVVADEHVDPEFGTGAVKVTPAHDPNDFEIGQRHGLPAIAVMDEHAVITAHGPFQGQDRLEARSAIVAALRAEGRIVAEKRPYVHSVGHCSRCKTTIEPRLSMQWWVKVGPLAKAAGDAVRDGKVKIHPQEMEKRYFDWVDNLHDWCISRQLWWGHRIPVWYGPEGEVVCVGPGEEPPSGEGWYQDSDVLDTWFSSGLWPFSTLGWPEQTESLAKFYPNSVLVTGYDILFFWVARMMMFGLYAMDGTPPFHTIALHGMVRDQNGKKMSKSFGNVVNPLDWMDKYGSDALRFTLARGANPGVDVPIGEDWVQGSRNFANKIWNATRFALMNGATVEGPLPDASRMSSTDRWILSRLNSVVAEVDAYYEDYQFAKLSDALFHFAWDEVFDWYVELSKTTFQAGGEAAEVSKRVLGEVLDVTLRLLHPVVPFVTETLWTTLTGGESVVIAEWPTDSGFRDAGAEREIETVQSVITEVRRFRADQGLQPGQRVPARLTLAGSALAAHEAAVRQLLRLQPEGDAFTATATLPVAGVEVALDLSGVIDFAAERKRLAKDLAAAEKEKAQANAKLGNEAFLAKAPDQVVDKIRGRLAKADEDITRITAQLEKLPEA.

The interval methionine 1–proline 22 is disordered. A 'HIGH' region motif is present at residues proline 57 to histidine 67. Positions lysine 531 to serine 535 match the 'KMSKS' region motif. Lysine 534 provides a ligand contact to ATP. Residues valine 805 to leucine 871 adopt a coiled-coil conformation.

This sequence belongs to the class-I aminoacyl-tRNA synthetase family. ValS type 1 subfamily. As to quaternary structure, monomer.

It localises to the cytoplasm. It catalyses the reaction tRNA(Val) + L-valine + ATP = L-valyl-tRNA(Val) + AMP + diphosphate. In terms of biological role, catalyzes the attachment of valine to tRNA(Val). As ValRS can inadvertently accommodate and process structurally similar amino acids such as threonine, to avoid such errors, it has a 'posttransfer' editing activity that hydrolyzes mischarged Thr-tRNA(Val) in a tRNA-dependent manner. In Streptomyces coelicolor (strain ATCC BAA-471 / A3(2) / M145), this protein is Valine--tRNA ligase.